Reading from the N-terminus, the 86-residue chain is Small ribosomal subunit protein bS16 (86 aa).

This sequence belongs to the bacterial ribosomal protein bS16 family.

This is Small ribosomal subunit protein bS16 from Bordetella petrii (strain ATCC BAA-461 / DSM 12804 / CCUG 43448).